A 677-amino-acid chain; its full sequence is MAKIKKKGTSGQAKNYITRTQAVRKLQISLPDFRRLCIFKGIYPREPRNKKKASKSATQSTTFYYTKDIQYLLHEPLLRKFREQKALAKKIARSLGRGEVSDAARLEKNHAPKLTLDHVIKERYPTFIDALRDLDDALSLLFLFANLPSTSHVPPKTIALCQRVTHEFQHYLITTNSLRKSFLSIKGIYYQATIQGQDIMWLVPYRFVQRVNGDVDYRIMATFVEFYTTLLGFVNYRLYSSIGLRYPPKFDTRLDENGAELAAFTLEGRTVGDAPKAIEPAKSSSDAANQEVSAEVQKKVDNVIKKAGLDQASSEQPTETAEEVTDAIDKFETTAPEADTLPQPDMSGDQAGSLFAPFTFYISREAPKTPLEFILRAFGCKRIGWDTVLGGGAFTHNEADPRITHQIVDRPSLPESSLPSIPAAATDGGAVQKVKPGTRVPGRTYVQPQWVWDCINEGKLLRPDLYAPGATLPPHLSPWVNPKKGGYDPRASLAEQEEDGEADIDAEEESDEEMEEAGEEKPAPTAANESEDSEDESVDGGMDVAETDDDDSESEEEEEEEDEFAGIDDEDAGSESEDEEETARTQHQKELEAEAAGLPFSSSGAGDDAAAKKKSQAKKRAAKKRQEEEELERQKMMMSRKKRKLLEKMMYSNKKTAEESAKLRSKRRKIEKGAAGK.

Positions 359-468 (TFYISREAPK…KLLRPDLYAP (110 aa)) constitute a BRCT domain. Positions 472 to 677 (LPPHLSPWVN…RKIEKGAAGK (206 aa)) are disordered. 3 stretches are compositionally biased toward acidic residues: residues 495–518 (EQEE…EEAG), 529–538 (ESEDSEDESV), and 545–581 (AETD…DEEE). Positions 582–592 (TARTQHQKELE) are enriched in basic and acidic residues. Residues 609-650 (AAAKKKSQAKKRAAKKRQEEEELERQKMMMSRKKRKLLEKMM) are a coiled coil. Over residues 612-623 (KKKSQAKKRAAK) the composition is skewed to basic residues. Over residues 624 to 635 (KRQEEEELERQK) the composition is skewed to basic and acidic residues.

This sequence belongs to the pescadillo family. Component of the NOP7 complex, composed of erb1, nop7 and ytm1. The complex is held together by erb1, which interacts with nop7 via its N-terminal domain and with ytm1 via a high-affinity interaction between the seven-bladed beta-propeller domains of the 2 proteins. The NOP7 complex associates with the 66S pre-ribosome.

The protein resides in the nucleus. It localises to the nucleolus. Its subcellular location is the nucleoplasm. In terms of biological role, component of the NOP7 complex, which is required for maturation of the 25S and 5.8S ribosomal RNAs and formation of the 60S ribosome. The chain is Pescadillo homolog (nop7) from Emericella nidulans (strain FGSC A4 / ATCC 38163 / CBS 112.46 / NRRL 194 / M139) (Aspergillus nidulans).